Reading from the N-terminus, the 69-residue chain is Large ribosomal subunit protein bL31 (69 aa).

Zn(2+)-binding residues include Cys-16, Cys-18, Cys-37, and Cys-40.

This sequence belongs to the bacterial ribosomal protein bL31 family. Type A subfamily. Part of the 50S ribosomal subunit. Zn(2+) serves as cofactor.

Functionally, binds the 23S rRNA. This Syntrophotalea carbinolica (strain DSM 2380 / NBRC 103641 / GraBd1) (Pelobacter carbinolicus) protein is Large ribosomal subunit protein bL31.